A 332-amino-acid polypeptide reads, in one-letter code: MKVAVLGAGAWGTALAGHLAARHDTLLWARDAALIAGLQARHENSRYLDGIALPDALRYDADLGAALAHGAADDALCVIAAPVAGLRTLCHAMRDAGCVPAHVVWVCKGFEADTHLLPHQVIAAELPEQQSNGVLSGPSFAREVGQSLPVALTVASVSAECRERTLAAFHHGAMRIYTGDDVVGVEVGGAVKNVLAIATGISDGLGLGLNARAALITRGLAEMSRLGVVLGGRAETFTGLTGLGDLILTATGDLSRNRTVGLQLAAGRTLNDILGALGHVAEGVRCAQAVLALARAQSIDMPITQAVCGVLFDGIAPRDAVSGLLRRDARAE.

Residues tryptophan 11, arginine 30, and lysine 108 each contribute to the NADPH site. Sn-glycerol 3-phosphate contacts are provided by lysine 108, glycine 137, and serine 139. Position 141 (alanine 141) interacts with NADPH. Sn-glycerol 3-phosphate-binding residues include lysine 192, aspartate 245, serine 255, arginine 256, and asparagine 257. Catalysis depends on lysine 192, which acts as the Proton acceptor. Arginine 256 contacts NADPH. 2 residues coordinate NADPH: valine 280 and glutamate 282.

Belongs to the NAD-dependent glycerol-3-phosphate dehydrogenase family.

It is found in the cytoplasm. The catalysed reaction is sn-glycerol 3-phosphate + NAD(+) = dihydroxyacetone phosphate + NADH + H(+). It carries out the reaction sn-glycerol 3-phosphate + NADP(+) = dihydroxyacetone phosphate + NADPH + H(+). Its pathway is membrane lipid metabolism; glycerophospholipid metabolism. Its function is as follows. Catalyzes the reduction of the glycolytic intermediate dihydroxyacetone phosphate (DHAP) to sn-glycerol 3-phosphate (G3P), the key precursor for phospholipid synthesis. The chain is Glycerol-3-phosphate dehydrogenase [NAD(P)+] from Burkholderia orbicola (strain AU 1054).